Consider the following 1290-residue polypeptide: DNA-directed RNA polymerase subunit beta' (1290 aa).

Cys-68, Cys-70, Cys-83, and Cys-86 together coordinate Zn(2+). Residues Asp-530, Asp-532, and Asp-534 each contribute to the Mg(2+) site. The Zn(2+) site is built by Cys-909, Cys-985, Cys-992, and Cys-995.

This sequence belongs to the RNA polymerase beta' chain family. As to quaternary structure, the RNAP catalytic core consists of 2 alpha, 1 beta, 1 beta' and 1 omega subunit. When a sigma factor is associated with the core the holoenzyme is formed, which can initiate transcription. It depends on Mg(2+) as a cofactor. Zn(2+) serves as cofactor.

The enzyme catalyses RNA(n) + a ribonucleoside 5'-triphosphate = RNA(n+1) + diphosphate. In terms of biological role, DNA-dependent RNA polymerase catalyzes the transcription of DNA into RNA using the four ribonucleoside triphosphates as substrates. In Mycoplasma pneumoniae (strain ATCC 29342 / M129 / Subtype 1) (Mycoplasmoides pneumoniae), this protein is DNA-directed RNA polymerase subunit beta'.